The primary structure comprises 532 residues: Probable cytochrome c oxidase subunit 1 (532 aa).

Transmembrane regions (helical) follow at residues 33–53 (IMYIIFAIFAGIVGGLFSLLF), 74–94 (VLITAHAVIMVFFMIMPALFG), 95–115 (GFGNYFVPLLIGAPDMAFPRL), 118–138 (ISFWLLVPAFILLMGSAFVDG), 163–183 (MAIFSLHLTGLSSILGSINLI), 200–220 (PLFVWSILVTAFLIILAMPVL), 252–272 (LFWFFGHPEVYIVILPGFGIV), and 284–304 (IFGYQGMVGAMVIIGFVGFIV). His79 lines the Fe(II)-heme a pocket. Cu cation contacts are provided by His258 and Tyr262. The Cu cation site is built by His307 and His308. The next 2 membrane-spanning stretches (helical) occupy residues 318 to 338 (ALIYFTAGTMIIAIPTGIKIF) and 355 to 375 (MLFSIGFIILFTIGGVTGIIL). His393 contacts heme a3. The next 3 membrane-spanning stretches (helical) occupy residues 394–414 (FHYTMSLGALFTAFAGFYYWF), 431–451 (FWITFVGVNLTFFPQHFLGLA), and 473–493 (IGAGISMAAALYFVFIVFYTL). His395 is a binding site for Fe(II)-heme a.

Belongs to the heme-copper respiratory oxidase family.

The protein localises to the cell membrane. The enzyme catalyses 4 Fe(II)-[cytochrome c] + O2 + 8 H(+)(in) = 4 Fe(III)-[cytochrome c] + 2 H2O + 4 H(+)(out). Its pathway is energy metabolism; oxidative phosphorylation. Its function is as follows. Cytochrome c oxidase is the component of the respiratory chain that catalyzes the reduction of oxygen to water. Subunits 1-3 form the functional core of the enzyme complex. CO I is the catalytic subunit of the enzyme. Electrons originating in cytochrome c are transferred via the copper A center of subunit 2 and heme A of subunit 1 to the bimetallic center formed by heme A3 and copper B. The sequence is that of Probable cytochrome c oxidase subunit 1 (ctaD) from Rickettsia bellii (strain RML369-C).